We begin with the raw amino-acid sequence, 396 residues long: Alanine racemase (396 aa).

Lys-46 acts as the Proton acceptor; specific for D-alanine in catalysis. N6-(pyridoxal phosphate)lysine is present on Lys-46. Residue Arg-145 coordinates substrate. Tyr-280 acts as the Proton acceptor; specific for L-alanine in catalysis. Position 328 (Met-328) interacts with substrate.

This sequence belongs to the alanine racemase family. It depends on pyridoxal 5'-phosphate as a cofactor.

It carries out the reaction L-alanine = D-alanine. It functions in the pathway amino-acid biosynthesis; D-alanine biosynthesis; D-alanine from L-alanine: step 1/1. Its function is as follows. Catalyzes the interconversion of L-alanine and D-alanine. May also act on other amino acids. The protein is Alanine racemase (alr) of Brucella abortus (strain 2308).